The following is a 321-amino-acid chain: Acetyl-coenzyme A carboxylase carboxyl transferase subunit alpha (321 aa).

One can recognise a CoA carboxyltransferase C-terminal domain in the interval 39–293 (KLEEKSRKLT…KTELKRNLEE (255 aa)).

Belongs to the AccA family. As to quaternary structure, acetyl-CoA carboxylase is a heterohexamer composed of biotin carboxyl carrier protein (AccB), biotin carboxylase (AccC) and two subunits each of ACCase subunit alpha (AccA) and ACCase subunit beta (AccD).

It localises to the cytoplasm. It catalyses the reaction N(6)-carboxybiotinyl-L-lysyl-[protein] + acetyl-CoA = N(6)-biotinyl-L-lysyl-[protein] + malonyl-CoA. Its pathway is lipid metabolism; malonyl-CoA biosynthesis; malonyl-CoA from acetyl-CoA: step 1/1. Functionally, component of the acetyl coenzyme A carboxylase (ACC) complex. First, biotin carboxylase catalyzes the carboxylation of biotin on its carrier protein (BCCP) and then the CO(2) group is transferred by the carboxyltransferase to acetyl-CoA to form malonyl-CoA. The sequence is that of Acetyl-coenzyme A carboxylase carboxyl transferase subunit alpha from Methylococcus capsulatus (strain ATCC 33009 / NCIMB 11132 / Bath).